Reading from the N-terminus, the 444-residue chain is 1,4-beta-D-glucan glucohydrolase (444 aa).

Glu-164 acts as the Proton donor in catalysis. Glu-349 acts as the Nucleophile in catalysis.

The protein belongs to the glycosyl hydrolase 1 family. In terms of assembly, monomer.

It catalyses the reaction Hydrolysis of (1-&gt;4)-linkages in (1-&gt;4)-beta-D-glucans, to remove successive glucose units.. The enzyme catalyses Hydrolysis of terminal, non-reducing beta-D-glucosyl residues with release of beta-D-glucose.. It functions in the pathway glycan metabolism; cellulose degradation. Its pathway is glycan metabolism; beta-D-glucan degradation. With respect to regulation, activated by glucose up to 200 mM when p-nitrophenyl-beta-glucoside is used as the substrate. This activation by end product concentrations may be due to a transglycosylation activity of the enzyme. Its function is as follows. Broad substrate specificity glycosidase. Releases glucose from soluble glucooligomers, with a preference for longer oligomers; acts more readily on cellotetraose than on cellobiose. Displays similar activities towards the disaccharides lactose and cellobiose. Is also able to hydrolyze various aryl-beta-glycosides in vitro. In Thermotoga neapolitana (strain ATCC 49049 / DSM 4359 / NBRC 107923 / NS-E), this protein is 1,4-beta-D-glucan glucohydrolase.